The chain runs to 172 residues: Disulfide bond formation protein B (172 aa).

Over 1–11 the chain is Cytoplasmic; sequence MNPFRWSFRAQ. A helical membrane pass occupies residues 12–28; sequence FLLGFLACAGLLAYAIY. Residues 29-46 are Periplasmic-facing; the sequence is VQLHLGLEPCPLCIFQRI. Cys-38 and Cys-41 are oxidised to a cystine. The chain crosses the membrane as a helical span at residues 47–63; it reads AFAALAVFFLLGALHGP. At 64 to 70 the chain is on the cytoplasmic side; it reads RAAAGRK. A helical membrane pass occupies residues 71 to 88; sequence VYGVLSFIAAGVGMGIAA. The Periplasmic segment spans residues 89–145; sequence RHVWVQIRPKDMMSSCGPPLSFLSETMGPFEVFRTVLTGTGDCGNIDWRFLGLSMPM. A disulfide bridge links Cys-104 with Cys-131. A helical membrane pass occupies residues 146–164; it reads WSMVWFVGLALWALYAGFK. The Cytoplasmic portion of the chain corresponds to 165 to 172; it reads VRRSSVHH.

This sequence belongs to the DsbB family.

It localises to the cell inner membrane. In terms of biological role, required for disulfide bond formation in some periplasmic proteins. Acts by oxidizing the DsbA protein. The polypeptide is Disulfide bond formation protein B (Xanthomonas axonopodis pv. citri (strain 306)).